The chain runs to 634 residues: DNA gyrase subunit B (634 aa).

One can recognise a Toprim domain in the interval 416–530 (REIYIVEGDS…NGHVYIAMPP (115 aa)). 3 residues coordinate Mg(2+): glutamate 422, aspartate 495, and aspartate 497.

Belongs to the type II topoisomerase GyrB family. Heterotetramer, composed of two GyrA and two GyrB chains. In the heterotetramer, GyrA contains the active site tyrosine that forms a transient covalent intermediate with DNA, while GyrB binds cofactors and catalyzes ATP hydrolysis. Requires Mg(2+) as cofactor. It depends on Mn(2+) as a cofactor. Ca(2+) serves as cofactor.

It localises to the cytoplasm. It catalyses the reaction ATP-dependent breakage, passage and rejoining of double-stranded DNA.. In terms of biological role, a type II topoisomerase that negatively supercoils closed circular double-stranded (ds) DNA in an ATP-dependent manner to modulate DNA topology and maintain chromosomes in an underwound state. Negative supercoiling favors strand separation, and DNA replication, transcription, recombination and repair, all of which involve strand separation. Also able to catalyze the interconversion of other topological isomers of dsDNA rings, including catenanes and knotted rings. Type II topoisomerases break and join 2 DNA strands simultaneously in an ATP-dependent manner. In Borrelia hermsii, this protein is DNA gyrase subunit B.